The chain runs to 249 residues: MDGKKCSVWMFLPLVFTLFTSAGLWIVYFIAVEDDKILPLNSAARKSGVKHAPYISFAGDDPPASCVFSQVMNMAAFLALVVAVLRFIQLKPKVLNPWLNISGLVALCLASFGMTLLGNFQLTNDEEIHNVGTSLTFGFGTLTCWIQAALTLKVNIKNEGRRAGIPRVILSAVITLCVVLYFILMAQDIHMYAARVQWGLVMCFLAYFGTLAVEFRHYRYEIVCSEYQENFLSFSESLSEASEYQTDQV.

The Cytoplasmic portion of the chain corresponds to 1 to 9 (MDGKKCSVW). Residues 10-30 (MFLPLVFTLFTSAGLWIVYFI) form a helical membrane-spanning segment. Over 31–64 (AVEDDKILPLNSAARKSGVKHAPYISFAGDDPPA) the chain is Extracellular. The chain crosses the membrane as a helical span at residues 65 to 85 (SCVFSQVMNMAAFLALVVAVL). Topologically, residues 86 to 97 (RFIQLKPKVLNP) are cytoplasmic. A helical transmembrane segment spans residues 98–118 (WLNISGLVALCLASFGMTLLG). Residues 119–130 (NFQLTNDEEIHN) are Extracellular-facing. A helical membrane pass occupies residues 131–151 (VGTSLTFGFGTLTCWIQAALT). Topologically, residues 152 to 168 (LKVNIKNEGRRAGIPRV) are cytoplasmic. Residues 169-189 (ILSAVITLCVVLYFILMAQDI) form a helical membrane-spanning segment. Residues 190 to 192 (HMY) lie on the Extracellular side of the membrane. The helical transmembrane segment at 193–213 (AARVQWGLVMCFLAYFGTLAV) threads the bilayer. At 214 to 249 (EFRHYRYEIVCSEYQENFLSFSESLSEASEYQTDQV) the chain is on the cytoplasmic side.

It belongs to the DRAM/TMEM150 family.

The protein resides in the cell membrane. It localises to the lysosome membrane. The enzyme catalyses Ca(2+)(in) = Ca(2+)(out). It catalyses the reaction Na(+)(in) = Na(+)(out). The catalysed reaction is K(+)(in) = K(+)(out). It carries out the reaction Mg(2+)(in) = Mg(2+)(out). Functionally, nonselective cationic channel with high permeability to Ca(2+). Component of a mechanosensitive cation channel. Confers mechanically activated (MA) currents with slow inactivation kinetics. May contribute to proprioception. This Rattus norvegicus (Rat) protein is Transmembrane protein 150C (Tmem150c).